Here is a 432-residue protein sequence, read N- to C-terminus: Trigger factor (432 aa).

The PPIase FKBP-type domain maps to 161–246; it reads EDRVTIDFTG…LKKVEERELP (86 aa).

This sequence belongs to the FKBP-type PPIase family. Tig subfamily. Homodimer and monomer. In vivo most of the ribosomes are in complex with monomeric TF. Uncomplexed TF, however, is in a monomer-dimer equilibrium with approximately two thirds of TF existing in a dimeric state.

The protein resides in the cytoplasm. The catalysed reaction is [protein]-peptidylproline (omega=180) = [protein]-peptidylproline (omega=0). Functionally, involved in protein export. Acts as a chaperone by maintaining the newly synthesized protein in an open conformation. Functions as a peptidyl-prolyl cis-trans isomerase. The protein is Trigger factor of Shigella boydii serotype 4 (strain Sb227).